The sequence spans 168 residues: Ribosome maturation factor RimM (168 aa).

One can recognise a PRC barrel domain in the interval 96–168; that stretch reads EGDYYWTDLI…IIVVEWDADF (73 aa).

It belongs to the RimM family. Binds ribosomal protein uS19.

It is found in the cytoplasm. An accessory protein needed during the final step in the assembly of 30S ribosomal subunit, possibly for assembly of the head region. Essential for efficient processing of 16S rRNA. May be needed both before and after RbfA during the maturation of 16S rRNA. It has affinity for free ribosomal 30S subunits but not for 70S ribosomes. This Coxiella burnetii (strain Dugway 5J108-111) protein is Ribosome maturation factor RimM.